Reading from the N-terminus, the 594-residue chain is DNA polymerase epsilon subunit B (594 aa).

It belongs to the DNA polymerase epsilon subunit B family. As to quaternary structure, heterotetramer. Consists of four subunits: pol2, dpb2, dpb3 and dpb4. Interacts with dpb3.

It localises to the nucleus. Its function is as follows. As accessory component of the DNA polymerase epsilon (DNA polymerase II) participates in chromosomal DNA replication. The polypeptide is DNA polymerase epsilon subunit B (dpb2) (Schizosaccharomyces pombe (strain 972 / ATCC 24843) (Fission yeast)).